Here is a 98-residue protein sequence, read N- to C-terminus: MGSSKLLVALTLVVMITISYDLFSEIGISAATLVIPTCFENCNATFQDPECNKWCALLAYKDGSCLYPPSEVDDLPPIKRPYIPRCCCNPITLSPPSP.

Residues 1–19 form the signal peptide; sequence MGSSKLLVALTLVVMITIS. 4 disulfides stabilise this stretch: Cys-38/Cys-88, Cys-42/Cys-65, Cys-51/Cys-86, and Cys-55/Cys-87.

Belongs to the DEFL family.

The protein localises to the secreted. The polypeptide is Defensin-like protein 68 (Arabidopsis thaliana (Mouse-ear cress)).